The following is a 145-amino-acid chain: Large-conductance mechanosensitive channel (145 aa).

Transmembrane regions (helical) follow at residues Val14–Leu34, Leu38–Pro58, and Gly81–Val101.

The protein belongs to the MscL family. In terms of assembly, homopentamer.

It localises to the cell inner membrane. Functionally, channel that opens in response to stretch forces in the membrane lipid bilayer. May participate in the regulation of osmotic pressure changes within the cell. The sequence is that of Large-conductance mechanosensitive channel from Rhizobium leguminosarum bv. trifolii (strain WSM2304).